The following is a 190-amino-acid chain: Probable chemoreceptor glutamine deamidase CheD (190 aa).

This sequence belongs to the CheD family.

It carries out the reaction L-glutaminyl-[protein] + H2O = L-glutamyl-[protein] + NH4(+). Functionally, probably deamidates glutamine residues to glutamate on methyl-accepting chemotaxis receptors (MCPs), playing an important role in chemotaxis. The chain is Probable chemoreceptor glutamine deamidase CheD from Acidiphilium cryptum (strain JF-5).